We begin with the raw amino-acid sequence, 318 residues long: Cyclic AMP receptor-like protein F (318 aa).

Residues 1–3 are Extracellular-facing; sequence MKD. A helical membrane pass occupies residues 4-24; it reads IILIYMICAPISMIGSLFIII. Residues 25–38 are Cytoplasmic-facing; that stretch reads TWLLYAKLKNSGSN. Residues 39–59 form a helical membrane-spanning segment; it reads FIFFQAISDFFFTSKYIITII. The Extracellular portion of the chain corresponds to 60–83; sequence FYYINIPQFSDETSSTDTNPYCFS. A disulfide bridge links Cys-81 with Cys-177. The chain crosses the membrane as a helical span at residues 84–104; the sequence is LGLFSQFFGQATIMWSYTMTV. Residues 105–145 are Cytoplasmic-facing; that stretch reads KVFHSYFEMKKKNNNNNIGSNNIGGGGGGNNSNKQNSIDKT. The helical transmembrane segment at 146 to 166 threads the bilayer; that stretch reads LKWYHLFVWGFCLVNATIIGI. Residues 167-187 lie on the Extracellular side of the membrane; sequence SKQYGPSSTGCWIVGANNPYR. The helical transmembrane segment at 188–208 threads the bilayer; the sequence is FFELVPLYFTITTSIIILILI. Topologically, residues 209 to 234 are cytoplasmic; that stretch reads LVKMKKSKPSSLLPTESMRYNQQARE. The chain crosses the membrane as a helical span at residues 235–255; sequence FKIQLMKFVLIFIIFWLPATV. Over 256-267 the chain is Extracellular; that stretch reads LRTLEYFGIEKT. Residues 268-288 traverse the membrane as a helical segment; it reads FFILLDAVSVSLQALANSLVW. Topologically, residues 289–318 are cytoplasmic; the sequence is ATSPQFLKLMKRKVVNKPNKQMEREYLINK.

The protein belongs to the G-protein coupled receptor 5 family.

Its subcellular location is the membrane. Receptor for cAMP. The polypeptide is Cyclic AMP receptor-like protein F (crlF) (Dictyostelium discoideum (Social amoeba)).